The chain runs to 108 residues: UPF0060 membrane protein Mflv_3127 (108 aa).

Helical transmembrane passes span 7–27 (LLFV…WQGF), 32–52 (GWLW…VAAF), 61–81 (VLAA…MVAD), and 87–107 (RWDI…MYAP).

The protein belongs to the UPF0060 family.

The protein resides in the cell membrane. The protein is UPF0060 membrane protein Mflv_3127 of Mycolicibacterium gilvum (strain PYR-GCK) (Mycobacterium gilvum (strain PYR-GCK)).